Consider the following 1194-residue polypeptide: Protein argonaute 3 (1194 aa).

The segment covering methionine 1–arginine 98 has biased composition (basic and acidic residues). 2 disordered regions span residues methionine 1–serine 277 and threonine 299–glycine 341. Residues proline 142–aspartate 158 show a composition bias toward low complexity. Residues valine 167–valine 180 show a composition bias toward basic and acidic residues. Positions glycine 181–aspartate 214 are enriched in gly residues. The span at valine 215–valine 228 shows a compositional bias: basic and acidic residues. Positions glycine 229 to aspartate 238 are enriched in gly residues. Low complexity-rich tracts occupy residues glutamine 256–serine 277 and threonine 299–serine 316. Positions glycine 317–serine 326 are enriched in polar residues. A compositionally biased stretch (basic and acidic residues) spans serine 327–glycine 341. One can recognise a PAZ domain in the interval serine 540 to glutamate 656. A Piwi domain is found at leucine 841–glutamate 1145.

This sequence belongs to the argonaute family. Ago subfamily.

Its function is as follows. Involved in RNA-mediated post-transcriptional gene silencing (PTGS). Main component of the RNA-induced silencing complex (RISC) that binds to a short guide RNA such as a microRNA (miRNA) or small interfering RNA (siRNA). RISC uses the mature miRNA or siRNA as a guide for slicer-directed cleavage of homologous mRNAs to repress gene expression. The sequence is that of Protein argonaute 3 (AGO3) from Arabidopsis thaliana (Mouse-ear cress).